A 181-amino-acid chain; its full sequence is TATA-box-binding protein (181 aa).

Repeat copies occupy residues 7–83 and 98–173.

Belongs to the TBP family.

Its function is as follows. General factor that plays a role in the activation of archaeal genes transcribed by RNA polymerase. Binds specifically to the TATA box promoter element which lies close to the position of transcription initiation. This is TATA-box-binding protein from Methanococcus aeolicus (strain ATCC BAA-1280 / DSM 17508 / OCM 812 / Nankai-3).